The chain runs to 126 residues: Methylglyoxal synthase (126 aa).

The 126-residue stretch at 1-126 (MAGGKCIALI…AERLIKTLNH (126 aa)) folds into the MGS-like domain. Residues His-12, Lys-16, 38–41 (TGTT), and 59–60 (SG) each bind substrate. Asp-65 functions as the Proton donor/acceptor in the catalytic mechanism. Residue His-92 coordinates substrate.

The protein belongs to the methylglyoxal synthase family.

The catalysed reaction is dihydroxyacetone phosphate = methylglyoxal + phosphate. Functionally, catalyzes the formation of methylglyoxal from dihydroxyacetone phosphate. The protein is Methylglyoxal synthase of Rhizobium rhizogenes (strain K84 / ATCC BAA-868) (Agrobacterium radiobacter).